A 229-amino-acid chain; its full sequence is RNA chaperone ProQ (229 aa).

Positions 105–178 (EAKARVQAQR…PREEKHTPVS (74 aa)) are disordered. Residues 117–136 (QQAKKREAAAAAGDKESAPR) are compositionally biased toward basic and acidic residues. The span at 137–146 (RERKPRPAAP) shows a compositional bias: basic residues. A compositionally biased stretch (basic and acidic residues) spans 147 to 176 (RRKEGAERKPRAEKPAAKAPRAPREEKHTP).

The protein belongs to the ProQ family.

Its subcellular location is the cytoplasm. Functionally, RNA chaperone with significant RNA binding, RNA strand exchange and RNA duplexing activities. May regulate ProP activity through an RNA-based, post-transcriptional mechanism. The protein is RNA chaperone ProQ of Escherichia fergusonii (strain ATCC 35469 / DSM 13698 / CCUG 18766 / IAM 14443 / JCM 21226 / LMG 7866 / NBRC 102419 / NCTC 12128 / CDC 0568-73).